The sequence spans 376 residues: ATP synthase gamma chain, chloroplastic (376 aa).

Residues 1–52 (MSCSNVTMLVSSKPSLPDASNLSFRSAFNPFQLPSQNSSSSCTPSRPTSIQC) constitute a chloroplast transit peptide. Cysteine 133 is an active-site residue. The cysteines at positions 250 and 256 are disulfide-linked.

It belongs to the ATPase gamma chain family. In terms of assembly, F-type ATPases have 2 components, CF(1) - the catalytic core - and CF(0) - the membrane proton channel. CF(1) has five subunits: alpha(3), beta(3), gamma(1), delta(1), epsilon(1). CF(0) has four main subunits: a, b, b' and c.

Its subcellular location is the plastid. It is found in the chloroplast thylakoid membrane. Its function is as follows. Produces ATP from ADP in the presence of a proton gradient across the membrane. The gamma chain is believed to be important in regulating ATPase activity and the flow of protons through the CF(0) complex. This is ATP synthase gamma chain, chloroplastic (ATPC) from Pisum sativum (Garden pea).